We begin with the raw amino-acid sequence, 37 residues long: Large ribosomal subunit protein bL36B (37 aa).

Belongs to the bacterial ribosomal protein bL36 family.

The polypeptide is Large ribosomal subunit protein bL36B (Kineococcus radiotolerans (strain ATCC BAA-149 / DSM 14245 / SRS30216)).